Here is a 425-residue protein sequence, read N- to C-terminus: 2-methylserine hydroxymethyltransferase (425 aa).

(6S)-5,6,7,8-tetrahydrofolate contacts are provided by residues leucine 126 and 130 to 132 (GHL). Lysine 235 carries the post-translational modification N6-(pyridoxal phosphate)lysine. Glutamate 251 is a (6S)-5,6,7,8-tetrahydrofolate binding site.

This sequence belongs to the SHMT family. Homodimer. The cofactor is pyridoxal 5'-phosphate.

It is found in the cytoplasm. It catalyses the reaction (6R)-5,10-methylene-5,6,7,8-tetrahydrofolate + D-alanine + H2O = 2-methylserine + (6S)-5,6,7,8-tetrahydrofolate. It functions in the pathway one-carbon metabolism; tetrahydrofolate interconversion. Its activity is regulated as follows. Inhibited by hydroxylamine and sodium borohydride. Its function is as follows. Catalyzes the reversible interconversion of alpha-methyl-L-serine to D-alanine with tetrahydrofolate (THF) serving as the one-carbon carrier. Cannot use alpha-methyl-D-serine, L-serine, D-serine or L-alanine. The sequence is that of 2-methylserine hydroxymethyltransferase from Paracoccus sp.